Consider the following 491-residue polypeptide: NADH-quinone oxidoreductase subunit N 1 (491 aa).

A run of 14 helical transmembrane segments spans residues 9 to 29, 38 to 58, 76 to 96, 104 to 124, 126 to 146, 161 to 181, 211 to 231, 246 to 266, 276 to 296, 304 to 324, 329 to 349, 375 to 395, 410 to 432, and 461 to 481; these read IAAP…LDLL, PMYV…VPLW, FAAV…LLSF, SGYL…GGAG, LMVI…MIAF, FVLG…IYGA, VGVG…PFHI, AFMA…LLVA, FLLP…TVGI, LMAY…PGLG, SAAA…FAVV, VGVC…TGGF, AWIV…LKVI, and VVLA…GPVS.

It belongs to the complex I subunit 2 family. In terms of assembly, NDH-1 is composed of 14 different subunits. Subunits NuoA, H, J, K, L, M, N constitute the membrane sector of the complex.

Its subcellular location is the cell membrane. The catalysed reaction is a quinone + NADH + 5 H(+)(in) = a quinol + NAD(+) + 4 H(+)(out). Functionally, NDH-1 shuttles electrons from NADH, via FMN and iron-sulfur (Fe-S) centers, to quinones in the respiratory chain. The immediate electron acceptor for the enzyme in this species is believed to be a menaquinone. Couples the redox reaction to proton translocation (for every two electrons transferred, four hydrogen ions are translocated across the cytoplasmic membrane), and thus conserves the redox energy in a proton gradient. The sequence is that of NADH-quinone oxidoreductase subunit N 1 from Symbiobacterium thermophilum (strain DSM 24528 / JCM 14929 / IAM 14863 / T).